Reading from the N-terminus, the 379-residue chain is Cytochrome b (379 aa).

The next 4 membrane-spanning stretches (helical) occupy residues 34 to 54 (FGSLLGICLITQILTGLLLAM), 78 to 99 (WLIRNLHANGASFFFICIYLHI), 114 to 134 (WNTGVVLLLTLMATAFVGYVL), and 179 to 199 (FFALHFLLPFLIAGITLIHLT). Heme b-binding residues include His-84 and His-98. Heme b contacts are provided by His-183 and His-197. His-202 is an a ubiquinone binding site. Transmembrane regions (helical) follow at residues 227 to 247 (LKDALGFALMFIPLLTLAFFS), 289 to 309 (LGGVLALAASVLILFLIPFLH), 321 to 341 (LSQILFWLLVANLLILTWIGS), and 348 to 368 (FIIIGQMASFSYFLILLVLFP).

The protein belongs to the cytochrome b family. As to quaternary structure, the cytochrome bc1 complex contains 11 subunits: 3 respiratory subunits (MT-CYB, CYC1 and UQCRFS1), 2 core proteins (UQCRC1 and UQCRC2) and 6 low-molecular weight proteins (UQCRH/QCR6, UQCRB/QCR7, UQCRQ/QCR8, UQCR10/QCR9, UQCR11/QCR10 and a cleavage product of UQCRFS1). This cytochrome bc1 complex then forms a dimer. The cofactor is heme b.

The protein resides in the mitochondrion inner membrane. Its function is as follows. Component of the ubiquinol-cytochrome c reductase complex (complex III or cytochrome b-c1 complex) that is part of the mitochondrial respiratory chain. The b-c1 complex mediates electron transfer from ubiquinol to cytochrome c. Contributes to the generation of a proton gradient across the mitochondrial membrane that is then used for ATP synthesis. This is Cytochrome b (MT-CYB) from Rhea americana (Greater rhea).